A 515-amino-acid polypeptide reads, in one-letter code: Hyccin (515 aa).

Over residues 358–378 (STSQSALSNSSNTSSKNLLGK) the composition is skewed to low complexity. Disordered regions lie at residues 358–410 (STSQ…TQRA) and 491–515 (TDLP…LSTD). A compositionally biased stretch (basic and acidic residues) spans 389–403 (AGREKEGETCREHLS). Polar residues predominate over residues 498 to 515 (KQPNQQRPPSISITLSTD).

The protein belongs to the Hyccin family. As to quaternary structure, component of a phosphatidylinositol 4-kinase (PI4K) complex.

It is found in the cytoplasm. Its subcellular location is the cytosol. It localises to the cell membrane. In terms of biological role, component of a complex required to localize phosphatidylinositol 4-kinase (PI4K) to the plasma membrane. The complex acts as a regulator of phosphatidylinositol 4-phosphate (PtdIns(4)P) synthesis. This is Hyccin (HYCC1) from Gallus gallus (Chicken).